The sequence spans 477 residues: Regulatory protein HrpB (477 aa).

An HTH araC/xylS-type domain is found at 375–477 (RRAYRYIIEN…NEAPSETIWR (103 aa)). 2 consecutive DNA-binding regions (H-T-H motif) follow at residues 393 to 414 (REVAAHINVTERALQLAFKSAV) and 444 to 467 (IIDTASRWGIRSRSALVKGYRKQF).

Functionally, positive regulation of hypersensitive response genes involved in plant pathogenicity and partly of its own synthesis in minimal medium. The protein is Regulatory protein HrpB (hrpB) of Ralstonia nicotianae (strain ATCC BAA-1114 / GMI1000) (Ralstonia solanacearum).